A 130-amino-acid polypeptide reads, in one-letter code: Protein ApaG (130 aa).

An ApaG domain is found at 3–127 (RAVTRHIEVT…FSLDSPDGKR (125 aa)).

The chain is Protein ApaG from Bradyrhizobium sp. (strain ORS 278).